We begin with the raw amino-acid sequence, 238 residues long: Orotidine 5'-phosphate decarboxylase (238 aa).

Substrate is bound by residues aspartate 18, lysine 40, 67–76, threonine 122, arginine 183, glutamine 192, and arginine 213; that span reads DMKLLDIDNT. Lysine 69 (proton donor) is an active-site residue.

It belongs to the OMP decarboxylase family. Type 1 subfamily. Homodimer.

The enzyme catalyses orotidine 5'-phosphate + H(+) = UMP + CO2. It participates in pyrimidine metabolism; UMP biosynthesis via de novo pathway; UMP from orotate: step 2/2. Functionally, catalyzes the decarboxylation of orotidine 5'-monophosphate (OMP) to uridine 5'-monophosphate (UMP). This chain is Orotidine 5'-phosphate decarboxylase, found in Brucella melitensis biotype 2 (strain ATCC 23457).